We begin with the raw amino-acid sequence, 539 residues long: Tetracenomycin B2 monooxygenase-dioxygenase (539 aa).

4 residues coordinate FAD: L15, E35, Q128, and L152. The active-site Proton acceptor is Y231. D313 is a binding site for FAD.

This sequence belongs to the PheA/TfdB FAD monooxygenase family. FAD is required as a cofactor.

It catalyses the reaction tetracenomycin B2 + 2 NADPH + 2 O2 + 2 H(+) = 8-demethyltetracenomycin C + 2 NADP(+) + H2O. It carries out the reaction tetracenomycin A2 + 2 NADPH + 2 O2 + 2 H(+) = tetracenomycin C + 2 NADP(+) + H2O. The protein operates within antibiotic biosynthesis. Involved in the biosynthesis of elloramycin, an antitumor polyketide. In vivo, probably catalyzes the triple hydroxylation of 8-demethyltetracenomycin A2 (tetracenomycin B2) at positions C-4, C-4a and C-12a to give 8-demethyltetracenomycin C (8-DMTC). In vitro, catalyzes the triple hydroxylation of tetracenomycin A2 (TCM A2) to give tetracenomycin C (TCM C). Uses NADPH as an electron donor and requires molecular O(2). This chain is Tetracenomycin B2 monooxygenase-dioxygenase, found in Streptomyces olivaceus.